A 631-amino-acid chain; its full sequence is Probable basic-leucine zipper transcription factor F (631 aa).

Residues 35–62 (KKNANVFNNFQQQQQQIQQQNKQSNGLI) are a coiled coil. 3 disordered regions span residues 46 to 117 (QQQQ…HNNI), 154 to 207 (LNNS…NNQF), and 264 to 406 (MLNV…ERHQ). 2 stretches are compositionally biased toward low complexity: residues 155–206 (NNSY…NNNQ) and 271–360 (NNAN…GSNN). A coiled-coil region spans residues 328–366 (NNNNNNSNNISTQINNLNNNINNQNNQLNGSNNGKKKEE). In terms of domain architecture, bZIP spans 405 to 468 (HQKRQRRLVK…KLIREQLLYL (64 aa)). The tract at residues 407–427 (KRQRRLVKNREAAQLFRQRQK) is basic motif. The leucine-zipper stretch occupies residues 433–440 (LEKKVSDL). The disordered stretch occupies residues 546-631 (QGNLLGTPIP…PPQQSTPNQR (86 aa)). Composition is skewed to low complexity over residues 563–609 (SNSG…PNSS) and 618–631 (PQNTPPQQSTPNQR).

Belongs to the bZIP family.

The protein resides in the nucleus. Its function is as follows. Probable transcriptional regulator. This is Probable basic-leucine zipper transcription factor F (bzpF) from Dictyostelium discoideum (Social amoeba).